The primary structure comprises 43 residues: Protein PsbN (43 aa).

Residues 7–27 (LIVFIASLLLGVTGYSVYTAF) form a helical membrane-spanning segment.

The protein belongs to the PsbN family.

The protein resides in the plastid. The protein localises to the chloroplast thylakoid membrane. May play a role in photosystem I and II biogenesis. This Rhodomonas salina (Cryptomonas salina) protein is Protein PsbN.